The following is a 101-amino-acid chain: uncharacterized protein (101 aa).

The signal sequence occupies residues 1–27; sequence MQLTGSIYPWFTAYALLKSTLMELINS. A run of 2 helical transmembrane segments spans residues 42 to 64 and 79 to 98; these read LVPY…AISF and TFVF…NTFL.

It localises to the cytoplasm. It is found in the nucleus membrane. This is an uncharacterized protein from Schizosaccharomyces pombe (strain 972 / ATCC 24843) (Fission yeast).